An 86-amino-acid polypeptide reads, in one-letter code: Neurotoxin 3FTx-8a (86 aa).

The N-terminal stretch at methionine 1 to threonine 21 is a signal peptide. Cystine bridges form between cysteine 24-cysteine 45, cysteine 27-cysteine 32, cysteine 38-cysteine 63, cysteine 67-cysteine 78, and cysteine 79-cysteine 84.

Expressed by the venom gland.

It localises to the secreted. Binds with low affinity to muscular (alpha-1-beta-1-delta-epsilon/CHRNA1-CHRNB1-CHRND-CHRNE) and very low affinity to neuronal (alpha-7/CHRNA7) nicotinic acetylcholine receptor (nAChR). The polypeptide is Neurotoxin 3FTx-8a (Bungarus fasciatus (Banded krait)).